The sequence spans 122 residues: Large ribosomal subunit protein uL14c (122 aa).

Belongs to the universal ribosomal protein uL14 family. In terms of assembly, part of the 50S ribosomal subunit.

The protein resides in the plastid. It is found in the chloroplast. Its function is as follows. Binds to 23S rRNA. This is Large ribosomal subunit protein uL14c from Populus trichocarpa (Western balsam poplar).